An 839-amino-acid chain; its full sequence is Putative AC9 transposase (839 aa).

The span at 32 to 43 (SSSNANGTATDP) shows a compositional bias: polar residues. The segment at 32 to 85 (SSSNANGTATDPSQDDMAIVHEPQPQPQPQPEPQPQPQPEPEEEAPQKRAKKCT) is disordered. Pro residues predominate over residues 55 to 70 (QPQPQPQPEPQPQPQP).

In Zea mays (Maize), this protein is Putative AC9 transposase.